A 260-amino-acid chain; its full sequence is Indole-3-glycerol phosphate synthase (260 aa).

It belongs to the TrpC family.

It carries out the reaction 1-(2-carboxyphenylamino)-1-deoxy-D-ribulose 5-phosphate + H(+) = (1S,2R)-1-C-(indol-3-yl)glycerol 3-phosphate + CO2 + H2O. Its pathway is amino-acid biosynthesis; L-tryptophan biosynthesis; L-tryptophan from chorismate: step 4/5. This Staphylococcus aureus (strain MRSA252) protein is Indole-3-glycerol phosphate synthase.